We begin with the raw amino-acid sequence, 44 residues long: Iota-conotoxin-like R11.11 (44 aa).

4 cysteine pairs are disulfide-bonded: Cys-5–Cys-19, Cys-12–Cys-22, Cys-18–Cys-27, and Cys-21–Cys-36. Position 44 (Arg-44) is a propeptide, removed by a carboxypeptidase.

Belongs to the conotoxin I1 superfamily. Expressed by the venom duct.

It localises to the secreted. Its function is as follows. Iota-conotoxins bind to voltage-gated sodium channels (Nav) and act as agonists by shifting the voltage-dependence of activation to more hyperpolarized levels. Produces general excitatory symptoms. The protein is Iota-conotoxin-like R11.11 of Conus radiatus (Rayed cone).